A 569-amino-acid chain; its full sequence is 4-hydroxy-7-methoxy-3-oxo-3,4-dihydro-2H-1,4-benzoxazin-2-yl glucoside beta-D-glucosidase 1b, chloroplastic (569 aa).

The transit peptide at 1–50 directs the protein to the chloroplast; the sequence is MALLAAATLNPTTHLSLRSRAGRNSENLWLRSTASSQKSKGRFCNLTIRA. Residues Gln92, His194, and 239–240 contribute to the a beta-D-glucoside site; that span reads NE. Residue Glu240 is the Proton donor of the active site. The cysteines at positions 259 and 265 are disulfide-linked. A beta-D-glucoside-binding positions include Tyr383, Glu456, Trp504, 511 to 512, and Phe520; that span reads EW. Residue Glu456 is the Nucleophile of the active site.

It belongs to the glycosyl hydrolase 1 family. In terms of assembly, homo- and heterohexamers. As to expression, expressed in young seedlings early after germination.

It localises to the plastid. It is found in the chloroplast. It catalyses the reaction Hydrolysis of terminal, non-reducing beta-D-glucosyl residues with release of beta-D-glucose.. The enzyme catalyses DIMBOA beta-D-glucoside + H2O = DIMBOA + D-glucose. The catalysed reaction is DIBOA beta-D-glucoside + H2O = DIBOA + D-glucose. Its function is as follows. Acts in defense of young plant parts against pests via the production of hydroxamic acids from hydroxamic acid glucosides. Enzymatic activity is highly correlated with plant growth. The preferred substrate is DIMBOA-beta-D-glucoside. The sequence is that of 4-hydroxy-7-methoxy-3-oxo-3,4-dihydro-2H-1,4-benzoxazin-2-yl glucoside beta-D-glucosidase 1b, chloroplastic (GLU1B) from Triticum aestivum (Wheat).